The primary structure comprises 244 residues: Zinc import ATP-binding protein ZnuC 2 (244 aa).

The region spanning 3–218 (IGCASLTIQL…PEYLALFGID (216 aa)) is the ABC transporter domain. ATP is bound at residue 35–42 (GPNGSGKT).

The protein belongs to the ABC transporter superfamily. Zinc importer (TC 3.A.1.15.5) family. The complex is composed of two ATP-binding proteins (ZnuC), two transmembrane proteins (ZnuB) and a solute-binding protein (ZnuA).

The protein resides in the cell inner membrane. The enzyme catalyses Zn(2+)(out) + ATP(in) + H2O(in) = Zn(2+)(in) + ADP(in) + phosphate(in) + H(+)(in). In terms of biological role, part of the ABC transporter complex ZnuABC involved in zinc import. Responsible for energy coupling to the transport system. The sequence is that of Zinc import ATP-binding protein ZnuC 2 from Hahella chejuensis (strain KCTC 2396).